We begin with the raw amino-acid sequence, 288 residues long: Ankyrin repeat and SOCS box protein 8 (288 aa).

Residue Ser17 is modified to Phosphoserine. ANK repeat units lie at residues 52 to 81 (GTLK…EVNA), 85 to 113 (YNRT…NPNA), 117 to 146 (NRDT…SVNA), and 150 to 179 (NNDT…EVRV). An SOCS box domain is found at 235 to 288 (QLCEKLTVLCSAPGTLKTLARYAVRRSLGLQYLPDAVKGLPLPVSLKDYLLLLE).

This sequence belongs to the ankyrin SOCS box (ASB) family. In terms of assembly, interacts with TBK1; this interaction promotes TBK1 proteasomal degradation. Post-translationally, phosphorylated by TBK1.

Its subcellular location is the cytoplasm. Its pathway is protein modification; protein ubiquitination. Its function is as follows. May be a substrate-recognition component of a SCF-like ECS (Elongin-Cullin-SOCS-box protein) E3 ubiquitin-protein ligase complex which mediates the ubiquitination and subsequent proteasomal degradation of target proteins. Inhibits IFN-beta production through the IRF3 signaling pathway by targeting TBK1 via 'Lys-48'-linked ubiquitination, leading to its proteasomal degradation. The sequence is that of Ankyrin repeat and SOCS box protein 8 (Asb8) from Mus musculus (Mouse).